Here is a 136-residue protein sequence, read N- to C-terminus: Ribosome-binding factor A (136 aa).

This sequence belongs to the RbfA family. In terms of assembly, monomer. Binds 30S ribosomal subunits, but not 50S ribosomal subunits or 70S ribosomes.

The protein localises to the cytoplasm. In terms of biological role, one of several proteins that assist in the late maturation steps of the functional core of the 30S ribosomal subunit. Associates with free 30S ribosomal subunits (but not with 30S subunits that are part of 70S ribosomes or polysomes). Required for efficient processing of 16S rRNA. May interact with the 5'-terminal helix region of 16S rRNA. The chain is Ribosome-binding factor A from Rhizobium etli (strain ATCC 51251 / DSM 11541 / JCM 21823 / NBRC 15573 / CFN 42).